Reading from the N-terminus, the 314-residue chain is Putative S-adenosyl-L-methionine-dependent methyltransferase MAV_4441 (314 aa).

Residues D138 and 167–168 (DL) each bind S-adenosyl-L-methionine.

This sequence belongs to the UPF0677 family.

In terms of biological role, exhibits S-adenosyl-L-methionine-dependent methyltransferase activity. The polypeptide is Putative S-adenosyl-L-methionine-dependent methyltransferase MAV_4441 (Mycobacterium avium (strain 104)).